A 207-amino-acid polypeptide reads, in one-letter code: Thiamine-phosphate synthase (207 aa).

Residues 35-39 (QYRDK) and Asn-67 each bind 4-amino-2-methyl-5-(diphosphooxymethyl)pyrimidine. Positions 68 and 86 each coordinate Mg(2+). Thr-105 provides a ligand contact to 4-amino-2-methyl-5-(diphosphooxymethyl)pyrimidine. A 2-[(2R,5Z)-2-carboxy-4-methylthiazol-5(2H)-ylidene]ethyl phosphate-binding site is contributed by 132–134 (SVT). Lys-135 is a 4-amino-2-methyl-5-(diphosphooxymethyl)pyrimidine binding site. 2-[(2R,5Z)-2-carboxy-4-methylthiazol-5(2H)-ylidene]ethyl phosphate is bound at residue Gly-162.

It belongs to the thiamine-phosphate synthase family. Requires Mg(2+) as cofactor.

It carries out the reaction 2-[(2R,5Z)-2-carboxy-4-methylthiazol-5(2H)-ylidene]ethyl phosphate + 4-amino-2-methyl-5-(diphosphooxymethyl)pyrimidine + 2 H(+) = thiamine phosphate + CO2 + diphosphate. The enzyme catalyses 2-(2-carboxy-4-methylthiazol-5-yl)ethyl phosphate + 4-amino-2-methyl-5-(diphosphooxymethyl)pyrimidine + 2 H(+) = thiamine phosphate + CO2 + diphosphate. It catalyses the reaction 4-methyl-5-(2-phosphooxyethyl)-thiazole + 4-amino-2-methyl-5-(diphosphooxymethyl)pyrimidine + H(+) = thiamine phosphate + diphosphate. It participates in cofactor biosynthesis; thiamine diphosphate biosynthesis; thiamine phosphate from 4-amino-2-methyl-5-diphosphomethylpyrimidine and 4-methyl-5-(2-phosphoethyl)-thiazole: step 1/1. Its function is as follows. Condenses 4-methyl-5-(beta-hydroxyethyl)thiazole monophosphate (THZ-P) and 2-methyl-4-amino-5-hydroxymethyl pyrimidine pyrophosphate (HMP-PP) to form thiamine monophosphate (TMP). The sequence is that of Thiamine-phosphate synthase from Pseudomonas putida (strain ATCC 700007 / DSM 6899 / JCM 31910 / BCRC 17059 / LMG 24140 / F1).